The following is a 558-amino-acid chain: Glucose-6-phosphate isomerase (558 aa).

N-acetylalanine is present on alanine 2. Lysine 12 carries the N6-acetyllysine modification. N6-(2-hydroxyisobutyryl)lysine is present on lysine 34. Residue serine 107 is modified to Phosphoserine. Threonine 109 is subject to Phosphothreonine. The residue at position 142 (lysine 142) is an N6-acetyllysine. Position 159–160 (159–160 (GS)) interacts with D-glucose 6-phosphate. Serine 185 bears the Phosphoserine; by CK2 mark. 210-215 (SKTFTT) serves as a coordination point for D-glucose 6-phosphate. Position 250 is a phosphothreonine (threonine 250). D-glucose 6-phosphate-binding residues include glutamine 354, glutamate 358, and histidine 389. Catalysis depends on glutamate 358, which acts as the Proton donor. The active site involves histidine 389. The residue at position 454 (lysine 454) is an N6-acetyllysine; alternate. N6-malonyllysine; alternate is present on lysine 454. Lysine 454 is modified (N6-succinyllysine; alternate). At serine 455 the chain carries Phosphoserine. Lysine 519 contacts D-glucose 6-phosphate. Lysine 519 is an active-site residue.

It belongs to the GPI family. In terms of assembly, homodimer in the catalytically active form, monomer in the secreted form. In terms of processing, phosphorylation at Ser-185 by CK2 has been shown to decrease enzymatic activity and may contribute to secretion by a non-classical secretory pathway. ISGylated.

Its subcellular location is the cytoplasm. It is found in the secreted. It catalyses the reaction alpha-D-glucose 6-phosphate = beta-D-fructose 6-phosphate. The protein operates within carbohydrate degradation; glycolysis; D-glyceraldehyde 3-phosphate and glycerone phosphate from D-glucose: step 2/4. Functionally, in the cytoplasm, catalyzes the conversion of glucose-6-phosphate to fructose-6-phosphate, the second step in glycolysis, and the reverse reaction during gluconeogenesis. Besides it's role as a glycolytic enzyme, also acts as a secreted cytokine: acts as an angiogenic factor (AMF) that stimulates endothelial cell motility. Acts as a neurotrophic factor, neuroleukin, for spinal and sensory neurons. It is secreted by lectin-stimulated T-cells and induces immunoglobulin secretion. This Sus scrofa (Pig) protein is Glucose-6-phosphate isomerase.